A 313-amino-acid chain; its full sequence is Ornithine carbamoyltransferase (313 aa).

Residues 57 to 60 (STRT), Arg-108, and 135 to 138 (HPTQ) each bind carbamoyl phosphate. L-ornithine-binding positions include Asn-167, Asp-231, and 235–236 (SM). Carbamoyl phosphate is bound by residues 272-273 (CL) and Arg-300.

This sequence belongs to the aspartate/ornithine carbamoyltransferase superfamily. OTCase family.

The protein resides in the cytoplasm. It catalyses the reaction carbamoyl phosphate + L-ornithine = L-citrulline + phosphate + H(+). The protein operates within amino-acid biosynthesis; L-arginine biosynthesis; L-arginine from L-ornithine and carbamoyl phosphate: step 1/3. Functionally, reversibly catalyzes the transfer of the carbamoyl group from carbamoyl phosphate (CP) to the N(epsilon) atom of ornithine (ORN) to produce L-citrulline. The polypeptide is Ornithine carbamoyltransferase (Thermotoga maritima (strain ATCC 43589 / DSM 3109 / JCM 10099 / NBRC 100826 / MSB8)).